The primary structure comprises 243 residues: NifU-like scaffold protein (243 aa).

The protein belongs to the NifU family. As to quaternary structure, homodimer.

The protein localises to the plastid. The protein resides in the apicoplast. The protein operates within cofactor biosynthesis; iron-sulfur cluster biosynthesis. Its function is as follows. Binds and transfers [4Fe-4S] iron-sulfur clusters to target proteins. The protein is NifU-like scaffold protein of Plasmodium berghei (strain Anka).